Reading from the N-terminus, the 421-residue chain is Serine--tRNA ligase (421 aa).

227–229 contacts L-serine; the sequence is TSE. ATP-binding positions include 257–259 and valine 273; that span reads RRE. Residue glutamate 280 participates in L-serine binding. 344 to 347 provides a ligand contact to ATP; that stretch reads ELTS. L-serine is bound at residue threonine 379.

This sequence belongs to the class-II aminoacyl-tRNA synthetase family. Type-1 seryl-tRNA synthetase subfamily. In terms of assembly, homodimer. The tRNA molecule binds across the dimer.

It is found in the cytoplasm. The catalysed reaction is tRNA(Ser) + L-serine + ATP = L-seryl-tRNA(Ser) + AMP + diphosphate + H(+). The enzyme catalyses tRNA(Sec) + L-serine + ATP = L-seryl-tRNA(Sec) + AMP + diphosphate + H(+). The protein operates within aminoacyl-tRNA biosynthesis; selenocysteinyl-tRNA(Sec) biosynthesis; L-seryl-tRNA(Sec) from L-serine and tRNA(Sec): step 1/1. Its function is as follows. Catalyzes the attachment of serine to tRNA(Ser). Is also able to aminoacylate tRNA(Sec) with serine, to form the misacylated tRNA L-seryl-tRNA(Sec), which will be further converted into selenocysteinyl-tRNA(Sec). This Leifsonia xyli subsp. xyli (strain CTCB07) protein is Serine--tRNA ligase.